The sequence spans 562 residues: AT-rich interactive domain-containing protein 1 (562 aa).

Positions 43 to 136 constitute an ARID domain; it reads KELISLFRPL…YLDAFGRWLN (94 aa). The ELM2 domain occupies 358-448; sequence PCALVGSKFQ…KLELGPAFYM (91 aa).

The protein localises to the nucleus. The polypeptide is AT-rich interactive domain-containing protein 1 (ARID1) (Arabidopsis thaliana (Mouse-ear cress)).